Reading from the N-terminus, the 956-residue chain is Outer capsid protein VP2 (956 aa).

The protein belongs to the orbivirus VP2 family.

The protein resides in the virion. Its function is as follows. The VP2 protein is one of the two proteins (with VP5) which constitute the virus particle outer capsid. It is the major target of the host immunogenic response. Responsible for viral attachment to target host cell, probably by binding to sialic acid. This attachment induces virion internalization predominantly through clathrin-dependent endocytosis. The protein is Outer capsid protein VP2 (Segment-2) of Bluetongue virus 10 (isolate USA) (BTV 10).